A 72-amino-acid polypeptide reads, in one-letter code: Metallothionein-like protein 1 (72 aa).

The protein belongs to the metallothionein superfamily. Type 15 family.

Functionally, metallothioneins have a high content of cysteine residues that bind various heavy metals. This chain is Metallothionein-like protein 1, found in Erythranthe guttata (Yellow monkey flower).